The sequence spans 429 residues: Phosphoribosylamine--glycine ligase (429 aa).

Residues 109 to 316 enclose the ATP-grasp domain; that stretch reads KDFLARHQIP…LVELCLAAID (208 aa). 135 to 196 serves as a coordination point for ATP; that stretch reads VREQGAPIVV…EEFLDGEEAS (62 aa). Residues 212–234 are disordered; it reads SQDHKRVGDKDTGPNTGGMGAYS. Basic and acidic residues predominate over residues 213 to 223; the sequence is QDHKRVGDKDT. Residues Glu-286 and Asn-288 each contribute to the Mg(2+) site.

It belongs to the GARS family. Mg(2+) serves as cofactor. It depends on Mn(2+) as a cofactor.

The enzyme catalyses 5-phospho-beta-D-ribosylamine + glycine + ATP = N(1)-(5-phospho-beta-D-ribosyl)glycinamide + ADP + phosphate + H(+). It functions in the pathway purine metabolism; IMP biosynthesis via de novo pathway; N(1)-(5-phospho-D-ribosyl)glycinamide from 5-phospho-alpha-D-ribose 1-diphosphate: step 2/2. The polypeptide is Phosphoribosylamine--glycine ligase (Vibrio vulnificus (strain YJ016)).